The primary structure comprises 116 residues: uncharacterized protein (116 aa).

Residues 52 to 72 (VFCSANSVPLYLLLLTSALHF) traverse the membrane as a helical segment.

It is found in the mitochondrion membrane. This is an uncharacterized protein from Arabidopsis thaliana (Mouse-ear cress).